Here is a 151-residue protein sequence, read N- to C-terminus: Large ribosomal subunit protein uL13 (151 aa).

Belongs to the universal ribosomal protein uL13 family. Part of the 50S ribosomal subunit.

This protein is one of the early assembly proteins of the 50S ribosomal subunit, although it is not seen to bind rRNA by itself. It is important during the early stages of 50S assembly. This is Large ribosomal subunit protein uL13 from Mycoplasma mycoides subsp. mycoides SC (strain CCUG 32753 / NCTC 10114 / PG1).